The sequence spans 353 residues: MTIAIGKSSEQPKGLFDSMDDWLRRDRFVFVGWSGLLLFPCAYFALGGWLTGTTFVTSWYTHGLASSYLEGCNFLTAAVSTPANSLSHSLLLLWGPEAQGDFTRWCQLGGLWTFVALHGAFGLIGFMLRQFELARSVQLRPYNALAFSGPIAVFVSVFLIYPLGQSGWFFAPSFGVAAIFRFILFFQGFHNWTLNPFHMMGVAGVLGAALLCAIHGATVENTLFEDGDGANTFRAFNPTQAEETYSMVTANRFWSQIFGVAFSNKRWLHFFMLFVPVTGLWMSAIGVVGLALNLRAYDFVSQEIRAAEDPEFETFYTKNILLNEGIRAWMAAQDQPHENLVFPEEVLPRGNAL.

Threonine 2 is modified (N-acetylthreonine). Threonine 2 is subject to Phosphothreonine. The helical transmembrane segment at 41 to 61 (CAYFALGGWLTGTTFVTSWYT) threads the bilayer. Histidine 118 is a binding site for chlorophyll a. The helical transmembrane segment at 125-141 (GFMLRQFELARSVQLRP) threads the bilayer. The pheophytin a site is built by glutamine 130 and asparagine 143. A helical membrane pass occupies residues 153 to 166 (VFVSVFLIYPLGQS). Histidine 198 is a chlorophyll a binding site. The chain crosses the membrane as a helical span at residues 208–228 (AALLCAIHGATVENTLFEDGD). Residues histidine 215 and phenylalanine 262 each contribute to the a plastoquinone site. Residue histidine 215 coordinates Fe cation. Histidine 269 contributes to the Fe cation binding site. Residues 279–295 (GLWMSAIGVVGLALNLR) traverse the membrane as a helical segment.

It belongs to the reaction center PufL/M/PsbA/D family. PSII is composed of 1 copy each of membrane proteins PsbA, PsbB, PsbC, PsbD, PsbE, PsbF, PsbH, PsbI, PsbJ, PsbK, PsbL, PsbM, PsbT, PsbX, PsbY, PsbZ, Psb30/Ycf12, at least 3 peripheral proteins of the oxygen-evolving complex and a large number of cofactors. It forms dimeric complexes. The cofactor is The D1/D2 heterodimer binds P680, chlorophylls that are the primary electron donor of PSII, and subsequent electron acceptors. It shares a non-heme iron and each subunit binds pheophytin, quinone, additional chlorophylls, carotenoids and lipids. There is also a Cl(-1) ion associated with D1 and D2, which is required for oxygen evolution. The PSII complex binds additional chlorophylls, carotenoids and specific lipids..

The protein resides in the plastid. Its subcellular location is the chloroplast thylakoid membrane. It carries out the reaction 2 a plastoquinone + 4 hnu + 2 H2O = 2 a plastoquinol + O2. Photosystem II (PSII) is a light-driven water:plastoquinone oxidoreductase that uses light energy to abstract electrons from H(2)O, generating O(2) and a proton gradient subsequently used for ATP formation. It consists of a core antenna complex that captures photons, and an electron transfer chain that converts photonic excitation into a charge separation. The D1/D2 (PsbA/PsbD) reaction center heterodimer binds P680, the primary electron donor of PSII as well as several subsequent electron acceptors. D2 is needed for assembly of a stable PSII complex. The sequence is that of Photosystem II D2 protein from Zygnema circumcarinatum (Green alga).